The following is a 291-amino-acid chain: 6-deoxy-6-sulfogluconolactonase (291 aa).

Residues E17, N148, and D198 each coordinate a divalent metal cation. The active-site Proton donor/acceptor is D198.

This sequence belongs to the SMP-30/CGR1 family. The cofactor is a divalent metal cation.

The catalysed reaction is 6-deoxy-6-sulfo-D-glucono-1,5-lactone + H2O = 6-deoxy-6-sulfo-D-gluconate + H(+). Functionally, catalyzes the hydrolysis of 6-deoxy-6-sulfo-D-glucono-1,5-lactone to form 6-deoxy-6-sulfo-D-gluconate. Is involved in a degradation pathway of sulfoquinovose (SQ) that allows P.putida SQ1 to use SQ as the sole carbon and energy source for growth. The chain is 6-deoxy-6-sulfogluconolactonase from Pseudomonas putida (Arthrobacter siderocapsulatus).